A 223-amino-acid chain; its full sequence is Lipoprotein-releasing system ATP-binding protein LolD (223 aa).

In terms of domain architecture, ABC transporter spans 1 to 223; the sequence is MAKVFRSGST…DEVEPQSLPA (223 aa). Residue 32 to 39 participates in ATP binding; the sequence is GDSGSGKS.

This sequence belongs to the ABC transporter superfamily. Lipoprotein translocase (TC 3.A.1.125) family. In terms of assembly, the complex is composed of two ATP-binding proteins (LolD) and two transmembrane proteins (LolC and LolE).

Its subcellular location is the cell inner membrane. Part of the ABC transporter complex LolCDE involved in the translocation of mature outer membrane-directed lipoproteins, from the inner membrane to the periplasmic chaperone, LolA. Responsible for the formation of the LolA-lipoprotein complex in an ATP-dependent manner. The protein is Lipoprotein-releasing system ATP-binding protein LolD of Koribacter versatilis (strain Ellin345).